A 398-amino-acid chain; its full sequence is Dihydroorotase (398 aa).

Zn(2+)-binding residues include His58 and His60. Substrate is bound by residues 60-62 and Asn92; that span reads HFR. Asp151, His178, and His215 together coordinate Zn(2+). Asn256 contacts substrate. Asp283 contributes to the Zn(2+) binding site. Residue Asp283 is part of the active site. Residues His287 and 297 to 298 contribute to the substrate site; that span reads PG.

It belongs to the metallo-dependent hydrolases superfamily. DHOase family. Class I DHOase subfamily. The cofactor is Zn(2+).

The enzyme catalyses (S)-dihydroorotate + H2O = N-carbamoyl-L-aspartate + H(+). Its pathway is pyrimidine metabolism; UMP biosynthesis via de novo pathway; (S)-dihydroorotate from bicarbonate: step 3/3. Its function is as follows. Catalyzes the reversible cyclization of carbamoyl aspartate to dihydroorotate. The polypeptide is Dihydroorotase (Clostridium botulinum (strain Eklund 17B / Type B)).